Consider the following 430-residue polypeptide: Adenylosuccinate synthetase (430 aa).

GTP is bound by residues 13 to 19 and 41 to 43; these read GDEGKGK and GHT. Asp-14 serves as the catalytic Proton acceptor. Residues Asp-14 and Gly-41 each contribute to the Mg(2+) site. IMP-binding positions include 14–17, 39–42, Thr-130, Arg-144, Gln-225, Thr-240, and Arg-304; these read DEGK and NAGH. His-42 serves as the catalytic Proton donor. 300-306 is a binding site for substrate; that stretch reads ASTGRPR. Residues Arg-306, 332 to 334, and 414 to 416 contribute to the GTP site; these read KLD and STG.

Belongs to the adenylosuccinate synthetase family. Homodimer. Mg(2+) is required as a cofactor.

It is found in the cytoplasm. It catalyses the reaction IMP + L-aspartate + GTP = N(6)-(1,2-dicarboxyethyl)-AMP + GDP + phosphate + 2 H(+). Its pathway is purine metabolism; AMP biosynthesis via de novo pathway; AMP from IMP: step 1/2. Functionally, plays an important role in the de novo pathway of purine nucleotide biosynthesis. Catalyzes the first committed step in the biosynthesis of AMP from IMP. The sequence is that of Adenylosuccinate synthetase from Xanthomonas campestris pv. campestris (strain 8004).